The following is a 193-amino-acid chain: Flagellin B3 (193 aa).

Residues 1 to 12 (MFEFITDEDERG) constitute a propeptide that is removed on maturation.

Belongs to the archaeal flagellin family. Glycosylated.

It localises to the archaeal flagellum. Functionally, flagellin is the subunit protein which polymerizes to form the filaments of archaeal flagella. This chain is Flagellin B3 (flaB3), found in Halobacterium salinarum (strain ATCC 700922 / JCM 11081 / NRC-1) (Halobacterium halobium).